The sequence spans 436 residues: GTPase Der (436 aa).

2 EngA-type G domains span residues 4-167 (PTIA…PNEE) and 175-351 (IKFS…QSQN). GTP contacts are provided by residues 10-17 (GRPNVGKS), 57-61 (DTGGI), 119-122 (NKVD), 181-188 (GRPNVGKS), 229-233 (DTAGM), and 294-297 (NKWD). Positions 352–436 (TRIPSAVLND…PIHLIARKRK (85 aa)) constitute a KH-like domain.

Belongs to the TRAFAC class TrmE-Era-EngA-EngB-Septin-like GTPase superfamily. EngA (Der) GTPase family. In terms of assembly, associates with the 50S ribosomal subunit.

GTPase that plays an essential role in the late steps of ribosome biogenesis. The protein is GTPase Der of Streptococcus sanguinis (strain SK36).